The sequence spans 512 residues: Glutathione-binding protein GsiB (512 aa).

The signal sequence occupies residues 1–26 (MARAVHRSGLVALGIATALMASCAFA).

The protein belongs to the bacterial solute-binding protein 5 family. As to quaternary structure, the complex is composed of two ATP-binding proteins (GsiA), two transmembrane proteins (GsiC and GsiD) and a solute-binding protein (GsiB). In the presence of glutathione, interacts with the transmembrane proteins GsiC and GsiD.

The protein resides in the periplasm. Part of the ABC transporter complex GsiABCD involved in glutathione import. Binds glutathione. The polypeptide is Glutathione-binding protein GsiB (Escherichia coli (strain K12)).